The chain runs to 72 residues: Translation initiation factor IF-1 2 (72 aa).

The 72-residue stretch at 1-72 (MAKEDVIEMQ…TKGRIVFRTK (72 aa)) folds into the S1-like domain.

The protein belongs to the IF-1 family. As to quaternary structure, component of the 30S ribosomal translation pre-initiation complex which assembles on the 30S ribosome in the order IF-2 and IF-3, IF-1 and N-formylmethionyl-tRNA(fMet); mRNA recruitment can occur at any time during PIC assembly.

The protein resides in the cytoplasm. Its function is as follows. One of the essential components for the initiation of protein synthesis. Stabilizes the binding of IF-2 and IF-3 on the 30S subunit to which N-formylmethionyl-tRNA(fMet) subsequently binds. Helps modulate mRNA selection, yielding the 30S pre-initiation complex (PIC). Upon addition of the 50S ribosomal subunit IF-1, IF-2 and IF-3 are released leaving the mature 70S translation initiation complex. In Azoarcus sp. (strain BH72), this protein is Translation initiation factor IF-1 2.